The chain runs to 1883 residues: MAQQQQQQHLQQQQQQHHQQQQLQQLQQQQQLPQYNNNLYNLNYNMEDPERRKRREREKYERQQGIQSDDRETSLFEAPRRLNPSEGDNMITAALGEFVDAKEHMCMNMVGIHRQAPGGGSNARLQGQATTPIINSLSSINSTTTTSSSASLLPGQLPTSQQQQQQQQQQQQHYQQQQRAPTYLKQADNKPPYNGRGGYPGQPMKNDIPSSSGMAPPRGPPRSASSSSSASNNNSSSATNNATAAAATSASTAPLLGPPMSTQMPNGREKSYLGPPAPALSNGGRFVPPAASGKRTSNTAGLQPPPPEKDISKIINEMTNSYRVTPLTSIAATPHAPTRENYNLNGPNKNKYAFDDVEPIGPLNSPPAASGASSSSLSCTTNSSSSLLMTPLLAPIAPITSPIAPLLTTPPQASQLPLPLPLLPPLAGATTVLPPALGMAAVAPIQQLMPTPPKASPTPPTAIRPLKSEKNHSLEKQDSCLENDLELSESDDDRKRDICSAGNSSNSSETDSSESGSEASSKGEAQQQQQQQQQLLHHQHQQQLLLQQQQQQQQQQRATATTANGGNKKKCQTIIASGANTISGLLTSSGLGGSGGAVNATSNTNSGLLGGGGGSGSTGGGGGSSSSGMGNMSSSSSSNKTPSPTDSNRWHLSRFFPKPTNQATAESVSPGNVACGNVSMKVPGILPGGAQIIPESIDVTTAIVKNEKLHDDTRRITDDEDEDEQQQQRYAAGLSVTVKKEQQEQQQQQQQQQQQQQQQQQQQQQQQQLSAEQLALAGALPNNQIKREVRLSDSASISSGSASGSSSSDSAAGEVVPLPGPGETLQIPGVPAAITTVLRVPPAMQQKVPPNSVTLTPIGPLPASPKPRQKKPRKKKMSAATAPPLDSSDEDEPASSNKKHALELAATTAAAAAAIAAAPAATAAALPAVKKGRGRPRKQQQQLQQTQSGNLSSASAGSLAKGPTLTAAKKPLAKSTAAAAAAAALAATALTVAGSRKREHSSNSSSNGNTPTKKLHAAPATVAAAAAAAAAATTLLPPTAAAGSSSDEDSTSSSCSSTKSSNSSSSGSDSEATATTAAAATTAAAAAAATTTTTQNPAKKRIVKINKLGVVSSSKNNRLYGAGSSSNSSSSETEEQQQQQQQHKQQQQLLLMQQQQQQQQQQQQKQQLQQHQQQQPLQPQQQQQQQSHFTPDAKQARQRSSSSDGSSSSSTDSSSTNSSSSSDEVDVHHGGGKRKSDKKKICTLTRIFNPKEGGAKKQGQVVIIDQSEEQLQQQQQQLQQQQQQQQQHQQQQQQQQQQEQQQSKEWKPRATPTQLLGATLASPARTTTPHLTSLMCKIDLSKLARVPPEWYQKSYRQYAAEQQQQQQQHLHTQQLHHPPHHQHQHYQQQHQPHQQKAQQNGHLSSRSAEGARTPKELQQAYGMPNGYVTSGGAAGAAGAASKLLGGVKHEHGVKPEPELDAGYEAKYKPNSVKQEFMPKQEMPTRRRKRSSSSSPYKEKKRKKEKADQVSKELLPVPVLLPANNHERLSRDKLELLQQEISSANGSPTKRSFPLAHAQQQQHQQQQQQQQHQPQHQQQLKATTTTSTTATVAAVQTSTTATQQPTTCSEAVQTTPPPVAPPPPPRLIYRSHFDNEEEPPSDDLRKNEILLQEAIRRKRAADSERDSFKQMTLYLEAIVYFLLTADAMERSNMEATWTMYKDTLTLIKFISSKNRPYQQSTNGKHESHNIVAILSLRCQSLISLKLYKLRRANCRAIIASCSEFFRTGGRGDILNGNTLSSISPSNSVGSQGSGSNTPPGRIVPQDIHNQLCRQNEYLTYVNSAHDLWDQADRLVRTGNHIDFIRKLDHENGPMTLHSTMHEVFRYVQAGLKTLRDSVSYPQSQ.

The segment covering 1-45 (MAQQQQQQHLQQQQQQHHQQQQLQQLQQQQQLPQYNNNLYNLNYN) has biased composition (low complexity). Disordered stretches follow at residues 1–88 (MAQQ…SEGD), 140–311 (INST…EKDI), 329–381 (SIAA…SCTT), 449–540 (MPTP…HHQH), 609–654 (LGGG…HLSR), 796–827 (SISS…TLQI), 844–901 (MQQK…KKHA), 922–962 (TAAA…LAKG), 992–1018 (VAGS…LHAA), 1039–1075 (TAAA…ATAT), 1115–1145 (KNNR…QHKQ), 1170–1238 (QHQQ…KSDK), 1358–1413 (YAAE…GART), 1450–1510 (EHGV…DQVS), 1543–1583 (ANGS…KATT), 1595–1641 (QTST…PPSD), and 1783–1803 (PSNS…RIVP). Over residues 57–80 (REKYERQQGIQSDDRETSLFEAPR) the composition is skewed to basic and acidic residues. Composition is skewed to low complexity over residues 140-154 (INST…SLLP), 161-178 (QQQQ…QQQQ), 223-253 (SASS…ASTA), and 362-381 (PLNS…SCTT). Pro residues predominate over residues 450–462 (PTPPKASPTPPTA). At Thr458 the chain carries Phosphothreonine. The span at 466–479 (LKSEKNHSLEKQDS) shows a compositional bias: basic and acidic residues. The span at 481 to 491 (LENDLELSESD) shows a compositional bias: acidic residues. Ser488 and Ser490 each carry phosphoserine. Residues 500–540 (SAGNSSNSSETDSSESGSEASSKGEAQQQQQQQQQLLHHQH) show a composition bias toward low complexity. Over residues 609–625 (LGGGGGSGSTGGGGGSS) the composition is skewed to gly residues. 2 stretches are compositionally biased toward low complexity: residues 626–639 (SSGM…SSSN) and 796–813 (SISS…SAAG). Positions 867–877 (PRQKKPRKKKM) are enriched in basic residues. A phosphoserine mark is found at Ser887 and Ser888. A DNA-binding region (a.T hook) is located at residues 930 to 942 (KKGRGRPRKQQQQ). Over residues 939–962 (QQQQLQQTQSGNLSSASAGSLAKG) the composition is skewed to low complexity. A phosphoserine mark is found at Ser953 and Ser955. 5 stretches are compositionally biased toward low complexity: residues 1124-1145 (SSSN…QHKQ), 1170-1186 (QHQQ…QQQQ), 1200-1222 (SSSS…SSSS), 1362-1376 (QQQQ…QQLH), and 1385-1399 (HYQQ…KAQQ). Basic and acidic residues predominate over residues 1450–1467 (EHGVKPEPELDAGYEAKY). Residue Ser1546 is modified to Phosphoserine. Residue Thr1548 is modified to Phosphothreonine. 2 stretches are compositionally biased toward low complexity: residues 1558 to 1583 (QQQQ…KATT) and 1595 to 1606 (QTSTTATQQPTT). Pro residues predominate over residues 1614–1625 (TPPPVAPPPPPR). A compositionally biased stretch (low complexity) spans 1783–1794 (PSNSVGSQGSGS).

The protein belongs to the AF4 family.

The protein localises to the nucleus. Functionally, has a role in transcriptional regulation. Acts in parallel with the Ras/MAPK and the PI3K/PKB pathways in the control of cell identity and cellular growth. Essential for regulation of the cytoskeleton and cell growth but not for cell proliferation or growth rate. Required specifically for the microtubule-based basal transport of lipid droplets. Plays a partially redundant function downstream of Raf in cell fate specification in the developing eye. Pair-rule protein that regulates embryonic cellularization, gastrulation and segmentation. This chain is AF4/FMR2 family member lilli, found in Drosophila grimshawi (Hawaiian fruit fly).